A 188-amino-acid chain; its full sequence is dCTP deaminase (188 aa).

DCTP contacts are provided by residues 111–116 (KSTYAR), 135–137 (TLE), Gln-156, Tyr-170, and Gln-180. Glu-137 acts as the Proton donor/acceptor in catalysis.

The protein belongs to the dCTP deaminase family. As to quaternary structure, homotrimer.

It catalyses the reaction dCTP + H2O + H(+) = dUTP + NH4(+). It participates in pyrimidine metabolism; dUMP biosynthesis; dUMP from dCTP (dUTP route): step 1/2. Catalyzes the deamination of dCTP to dUTP. The polypeptide is dCTP deaminase (Pseudomonas putida (strain GB-1)).